The sequence spans 66 residues: Prophage transcriptional regulatory protein (66 aa).

This Escherichia coli (strain K12) protein is Prophage transcriptional regulatory protein (croE).